The following is a 325-amino-acid chain: tRNA(Ile)-lysidine synthase (325 aa).

Position 34 to 39 (34 to 39) interacts with ATP; that stretch reads SGGADS.

It belongs to the tRNA(Ile)-lysidine synthase family.

It is found in the cytoplasm. The catalysed reaction is cytidine(34) in tRNA(Ile2) + L-lysine + ATP = lysidine(34) in tRNA(Ile2) + AMP + diphosphate + H(+). Its function is as follows. Ligates lysine onto the cytidine present at position 34 of the AUA codon-specific tRNA(Ile) that contains the anticodon CAU, in an ATP-dependent manner. Cytidine is converted to lysidine, thus changing the amino acid specificity of the tRNA from methionine to isoleucine. The polypeptide is tRNA(Ile)-lysidine synthase (Rhodococcus erythropolis (strain PR4 / NBRC 100887)).